Here is a 267-residue protein sequence, read N- to C-terminus: MKIIQVILKFIIIFIIPSIHAQECKLEFKTEKIHVNGVTYDQKVGDPITPIADAIKADNLEEVKKILDEGYGVNQPCLGWVPLDYAISNNNIKIADFLLKRDASMSLIHINIGFMKSEIAEFLINQGMSPNLRYEDGITGMMLAAERNNPDLIKLLLKLGVNPNVQNSKTGMTSLMYAASYLNVEVVRVLLEQGVDPNIKDFKGKRALNWIAVDANRKLHASDGEYYAALFLAPFETKQKIIKERNSIKTRNKEKEKEIKKLFNSHR.

4 ANK repeats span residues 46 to 75, 78 to 107, 136 to 165, and 170 to 199; these read DPITPIADAIKADNLEEVKKILDEGYGVNQ, LGWVPLDYAISNNNIKIADFLLKRDASMSL, DGITGMMLAAERNNPDLIKLLLKLGVNPNV, and TGMTSLMYAASYLNVEVVRVLLEQGVDPNI. Residues 238–265 adopt a coiled-coil conformation; it reads KQKIIKERNSIKTRNKEKEKEIKKLFNS.

The protein is Putative ankyrin repeat protein RF_1099 of Rickettsia felis (strain ATCC VR-1525 / URRWXCal2) (Rickettsia azadi).